The following is a 313-amino-acid chain: Ribosomal RNA small subunit methyltransferase H (313 aa).

Residues Gly35–His37, Asp55, Phe79, Asp100, and Gln107 contribute to the S-adenosyl-L-methionine site.

It belongs to the methyltransferase superfamily. RsmH family.

The protein localises to the cytoplasm. The catalysed reaction is cytidine(1402) in 16S rRNA + S-adenosyl-L-methionine = N(4)-methylcytidine(1402) in 16S rRNA + S-adenosyl-L-homocysteine + H(+). Its function is as follows. Specifically methylates the N4 position of cytidine in position 1402 (C1402) of 16S rRNA. The chain is Ribosomal RNA small subunit methyltransferase H from Burkholderia pseudomallei (strain 1106a).